A 26-amino-acid polypeptide reads, in one-letter code: Dermaseptin-B5 (26 aa).

Valine 26 carries the valine amide modification.

Belongs to the frog skin active peptide (FSAP) family. Dermaseptin subfamily. In terms of tissue distribution, expressed by the skin glands.

Its subcellular location is the secreted. Possesses a potent antimicrobial activity against Gram-positive and Gram-negative bacteria. Probably acts by disturbing membrane functions with its amphipathic structure. This is Dermaseptin-B5 from Phyllomedusa bicolor (Two-colored leaf frog).